The following is a 382-amino-acid chain: MSDGRVNADPQQEENMVKPPVKRSLTLLIVTYFFLFFGSIASSLLAKYYFVYGGSSRWVSTWVQSAGFPLLLILIYFPHYVLKTTTRRPFTRFTLRHLIFSVLIGLVLGFNNFLFSWGTSYLPVSTSSLLLSTQLVFTLILSRIIVKQKITFSNLNCVVLLTLSSVLLALDSSKDKPSGLTKTKYFIGYVSTIGAGLLFALYLPVTEKLYRTVYCYAMVMEVQLVMEFAATVFATIGMACEGGFKEMVKEANHVFTKGPTFYWTFAILANVVTWQLSFAATSGMVYLTSGITGGICMTALLAMNVIGGVVAYGDVFGGVKIVSTVLCIWGFSSYTYGMYMKMKKEEKEKGEYSGVKTTEDSGEMEVEMGNVKDDVAAADDRA.

A run of 10 helical transmembrane segments spans residues 25–45 (LTLL…SSLL), 62–82 (WVQS…HYVL), 98–118 (LIFS…FSWG), 121–141 (YLPV…TLIL), 150–170 (ITFS…LLAL), 185–205 (YFIG…YLPV), 224–244 (LVME…EGGF), 260–280 (TFYW…SFAA), 291–311 (ITGG…GVVA), and 315–335 (VFGG…SSYT). Residues 66-170 (AGFPLLLILI…LTLSSVLLAL (105 aa)) enclose the EamA domain. The segment at 345–364 (EEKEKGEYSGVKTTEDSGEM) is disordered.

Belongs to the purine permeases (TC 2.A.7.14) family.

It localises to the membrane. The polypeptide is Probable purine permease 4 (PUP4) (Arabidopsis thaliana (Mouse-ear cress)).